Reading from the N-terminus, the 106-residue chain is UPF0145 protein Fphi_1781 (106 aa).

The protein belongs to the UPF0145 family.

The sequence is that of UPF0145 protein Fphi_1781 from Francisella philomiragia subsp. philomiragia (strain ATCC 25017 / CCUG 19701 / FSC 153 / O#319-036).